A 261-amino-acid polypeptide reads, in one-letter code: Syntaxin-7 (261 aa).

Residue serine 2 is modified to N-acetylserine. Topologically, residues 2-238 (SYTPGIGGDP…NYQRKSRKTL (237 aa)) are cytoplasmic. A Phosphothreonine modification is found at threonine 4. Positions 47-68 (ELRQQLQQEQQYTNQLAKETDK) form a coiled coil. The residue at position 79 (threonine 79) is a Phosphothreonine. A phosphoserine mark is found at serine 125, serine 126, serine 129, and serine 205. A disordered region spans residues 128 to 148 (VSGGFPEDSSKEKNFVSWESQ). The region spanning 165–227 (LRLIHERESS…QQANQQLSRA (63 aa)) is the t-SNARE coiled-coil homology domain. The chain crosses the membrane as a helical; Anchor for type IV membrane protein span at residues 239-259 (CIIILILVVGIVIIFFIVWGL). Topologically, residues 260-261 (KG) are vesicular.

It belongs to the syntaxin family. In terms of assembly, interacts with VPS11, VPS16 and VPS18. Interacts with VPS33A. Forms a SNARE complex with VTI1B, STX8 and VAMP8 which functions in the homotypic fusion of late endosomes. Component of the SNARE complex composed of STX7, STX8, VAMP7 and VTI1B that is required for heterotypic fusion of late endosomes with lysosomes. Interacts with TPC1. In terms of tissue distribution, detected in all tissues tested. Highest expression is found in kidney followed by lung, spleen, heart and brain. Lower expression, in skeletal muscle, liver and testis.

Its subcellular location is the early endosome membrane. Functionally, may be involved in protein trafficking from the plasma membrane to the early endosome (EE) as well as in homotypic fusion of endocytic organelles. Mediates the endocytic trafficking from early endosomes to late endosomes and lysosomes. In Rattus norvegicus (Rat), this protein is Syntaxin-7 (Stx7).